We begin with the raw amino-acid sequence, 526 residues long: Cytochrome P450 monooxygenase ucsK (526 aa).

The helical transmembrane segment at 7–27 (PVLAAATAVSFGFYLAGLFVY) threads the bilayer. A glycan (N-linked (GlcNAc...) asparagine) is linked at asparagine 403. Heme is bound at residue cysteine 467.

It belongs to the cytochrome P450 family. It depends on heme as a cofactor.

Its subcellular location is the membrane. It functions in the pathway mycotoxin biosynthesis. Functionally, cytochrome P450 monooxygenase; part of the gene cluster that mediates the biosynthesis of UCS1025A, a member of the pyrrolizidinone family that acts as a strong telomerase inhibitor and displays potent antibacterial and antitumor properties. These compounds share a hemiaminal-containing pyrrolizidinone core fused with a gamma-lactone, giving a furopyrrolizidine that is connected to a decalin fragment. The polyketide synthase module (PKS) of the PKS-NRPS ucsA is responsible for the synthesis of the polyketide backbone via the condensation of an acetyl-CoA starter unit with 6 malonyl-CoA units. The downstream nonribosomal peptide synthetase (NRPS) module then amidates the carboxyl end of the polyketide with a 2S,3S-methylproline derived from L-isoleucine by the 2-oxoglutarate-dependent dioxygenase ucsF which converts L-isoleucine to (4S,5S)-4-methylpyrroline-5-carboxylate that is further converted to 2S,3S-methylproline by the pyrroline-5-carboxylate reductase ucsG. Reductive release of the completed aminoacyl polyketide from the assembly line can form the 3-pyrrolin-2-one structure via an intramolecular Knoevenagel reaction. Because ucsA lacks a designated enoylreductase (ER) domain, the required activity is provided the enoyl reductase ucsL. This keto acyclic precursor is the substrate of the Diels-Alderase ucsH, that catalyzes the Diels-Alder cycloaddition. Oxidation of the 3S-methyl group to a carboxylate by the cytochrome P450 monooxygenase ucsK allows an oxa-Michael cyclization that might involve the reductase/dehydrogenase ucsI and which furnishes the furopyrrolizidine. The oxidase ucsJ likely plays a critical role in stereoselective reduction of the C5-C6 double bond to afford the required R-configured carboxylate group. Further enolization and oxidation at C5 by an unidentified enzyme affords the last intermediate that can undergo oxa-Michael cyclization to yield UCS1025A. This Acremonium sp protein is Cytochrome P450 monooxygenase ucsK.